The following is a 261-amino-acid chain: 14-3-3-like protein B (261 aa).

Positions 237–261 (DIPEDGEDSQKANGTAKFGGGDDAE) are disordered.

This sequence belongs to the 14-3-3 family.

This Vicia faba (Broad bean) protein is 14-3-3-like protein B.